Here is an 87-residue protein sequence, read N- to C-terminus: Large ribosomal subunit protein bL31B-2/bL31B-3 (87 aa).

This sequence belongs to the bacterial ribosomal protein bL31 family. Type B subfamily. Part of the 50S ribosomal subunit.

The sequence is that of Large ribosomal subunit protein bL31B-2/bL31B-3 (rpmE2-2) from Escherichia coli O157:H7.